We begin with the raw amino-acid sequence, 540 residues long: Zinc metalloproteinase nas-10 (540 aa).

The region spanning 293–500 is the Peptidase M12A domain; the sequence is ASIFFEQNLI…VEILNKMYCK (208 aa). 5 disulfide bridges follow: Cys-339-Cys-499, Cys-365-Cys-385, Cys-504-Cys-540, Cys-511-Cys-533, and Cys-520-Cys-537. His-394 lines the Zn(2+) pocket. Residue Glu-395 is part of the active site. Zn(2+)-binding residues include His-398 and His-404. The ShKT domain occupies 504–540; sequence CDDKNVYCGAWALQDLCNNPNHNVWMRSNCRKSCNFC.

It depends on Zn(2+) as a cofactor.

In terms of biological role, metalloprotease. This Caenorhabditis elegans protein is Zinc metalloproteinase nas-10.